Here is a 75-residue protein sequence, read N- to C-terminus: Notewaprin-b (75 aa).

The N-terminal stretch at 1–24 (MSSGGLLLLLGLLTLWAELTPVSS) is a signal peptide. Residues 27–72 (RPKKPGLCPPRPQKPPCVRECKNDWICPGEQKCCRYGCIYECRDPI) form the WAP domain. 4 disulfide bridges follow: Cys-34-Cys-60, Cys-43-Cys-64, Cys-47-Cys-59, and Cys-53-Cys-68.

It belongs to the venom waprin family. In terms of tissue distribution, expressed by the venom gland.

It localises to the secreted. In terms of biological role, damages membranes of susceptible bacteria. Has no hemolytic activity. Not toxic to mice. Does not inhibit the proteinases elastase and cathepsin G. The polypeptide is Notewaprin-b (Notechis scutatus scutatus (Mainland tiger snake)).